A 180-amino-acid chain; its full sequence is MKDSPQVTVLRLGHRPGRDERMTTHVGLTARALGADKVVLANAARNQADTVIDITDRFGGPFDVASTEEPKRLIRDFEGRVVHLTMYGEPVQEVEADVREANTAEPLLVVVGAEKVPFEVYEHADWNVGVTNQPHSEVASLAVFLDRLFEGRELDREWENPDRVVVPQETGKRVVDPDEE.

S-adenosyl-L-methionine contacts are provided by residues L84 and 112–116 (GAEKV).

The protein belongs to the aTrm56 family. In terms of assembly, homodimer.

Its subcellular location is the cytoplasm. The enzyme catalyses cytidine(56) in tRNA + S-adenosyl-L-methionine = 2'-O-methylcytidine(56) in tRNA + S-adenosyl-L-homocysteine + H(+). Functionally, specifically catalyzes the AdoMet-dependent 2'-O-ribose methylation of cytidine at position 56 in tRNAs. The protein is tRNA (cytidine(56)-2'-O)-methyltransferase of Haloarcula marismortui (strain ATCC 43049 / DSM 3752 / JCM 8966 / VKM B-1809) (Halobacterium marismortui).